A 207-amino-acid chain; its full sequence is Dephospho-CoA kinase (207 aa).

Residues V4–Y203 form the DPCK domain. Residue A12 to T17 participates in ATP binding.

This sequence belongs to the CoaE family.

The protein resides in the cytoplasm. The enzyme catalyses 3'-dephospho-CoA + ATP = ADP + CoA + H(+). The protein operates within cofactor biosynthesis; coenzyme A biosynthesis; CoA from (R)-pantothenate: step 5/5. Functionally, catalyzes the phosphorylation of the 3'-hydroxyl group of dephosphocoenzyme A to form coenzyme A. This chain is Dephospho-CoA kinase, found in Staphylococcus aureus (strain MRSA252).